A 204-amino-acid chain; its full sequence is Large ribosomal subunit protein eL15z (204 aa).

A disordered region spans residues 161–204 (LRGLTSEGKKNRGLRGKGHNNHKNRPSRRATWKKNNSLSLRRYR). The span at 171 to 192 (NRGLRGKGHNNHKNRPSRRATW) shows a compositional bias: basic residues. The span at 193-204 (KKNNSLSLRRYR) shows a compositional bias: polar residues.

The protein belongs to the eukaryotic ribosomal protein eL15 family.

This chain is Large ribosomal subunit protein eL15z (RPL15A), found in Arabidopsis thaliana (Mouse-ear cress).